An 822-amino-acid polypeptide reads, in one-letter code: Glycerol-3-phosphate acyltransferase (822 aa).

Residues 306-311 carry the HXXXXD motif motif; that stretch reads CHRSHM. The tract at residues 803 to 822 is disordered; the sequence is ASSSAEMEAESQAVEETTQE.

The protein belongs to the GPAT/DAPAT family.

The protein resides in the cell inner membrane. It catalyses the reaction sn-glycerol 3-phosphate + an acyl-CoA = a 1-acyl-sn-glycero-3-phosphate + CoA. The protein operates within phospholipid metabolism; CDP-diacylglycerol biosynthesis; CDP-diacylglycerol from sn-glycerol 3-phosphate: step 1/3. The chain is Glycerol-3-phosphate acyltransferase from Pectobacterium carotovorum subsp. carotovorum (strain PC1).